Reading from the N-terminus, the 199-residue chain is N-(5'-phosphoribosyl)anthranilate isomerase (199 aa).

The protein belongs to the TrpF family.

The enzyme catalyses N-(5-phospho-beta-D-ribosyl)anthranilate = 1-(2-carboxyphenylamino)-1-deoxy-D-ribulose 5-phosphate. The protein operates within amino-acid biosynthesis; L-tryptophan biosynthesis; L-tryptophan from chorismate: step 3/5. The sequence is that of N-(5'-phosphoribosyl)anthranilate isomerase from Lacticaseibacillus casei (strain BL23) (Lactobacillus casei).